The sequence spans 156 residues: Ribosome-binding factor A (156 aa).

A compositionally biased stretch (basic and acidic residues) spans 125 to 138 (RVREGAKHAGDPDP). The tract at residues 125–156 (RVREGAKHAGDPDPYRVGGAEDTDGDTDGDER) is disordered. Residues 145 to 156 (EDTDGDTDGDER) show a composition bias toward acidic residues.

Belongs to the RbfA family. Monomer. Binds 30S ribosomal subunits, but not 50S ribosomal subunits or 70S ribosomes.

It localises to the cytoplasm. Functionally, one of several proteins that assist in the late maturation steps of the functional core of the 30S ribosomal subunit. Associates with free 30S ribosomal subunits (but not with 30S subunits that are part of 70S ribosomes or polysomes). Required for efficient processing of 16S rRNA. May interact with the 5'-terminal helix region of 16S rRNA. The sequence is that of Ribosome-binding factor A from Mycolicibacterium smegmatis (strain ATCC 700084 / mc(2)155) (Mycobacterium smegmatis).